The following is an 80-amino-acid chain: Cytochrome c-553 (80 aa).

Residues Cys-13, Cys-16, His-17, and Met-58 each coordinate heme c.

Post-translationally, binds 1 heme c group covalently per subunit.

It localises to the periplasm. Natural electron acceptor for a formate dehydrogenase. The polypeptide is Cytochrome c-553 (Desulfomicrobium norvegicum (strain DSM 1741 / NCIMB 8310) (Desulfovibrio baculatus (strain Norway 4))).